Reading from the N-terminus, the 217-residue chain is Ribosomal large subunit pseudouridine synthase E (217 aa).

Asp79 serves as the catalytic Nucleophile.

The protein belongs to the pseudouridine synthase RsuA family.

It carries out the reaction uridine(2457) in 23S rRNA = pseudouridine(2457) in 23S rRNA. Its function is as follows. Responsible for synthesis of pseudouridine from uracil-2457 in 23S ribosomal RNA. In Escherichia coli O6:H1 (strain CFT073 / ATCC 700928 / UPEC), this protein is Ribosomal large subunit pseudouridine synthase E (rluE).